The primary structure comprises 402 residues: Enoyl-[acyl-carrier-protein] reductase [NADH] (402 aa).

NAD(+) contacts are provided by residues glycine 48–phenylalanine 53, phenylalanine 75–glutamate 76, aspartate 112–valine 113, and isoleucine 141–alanine 142. Tyrosine 231 contacts substrate. Tyrosine 241 acts as the Proton donor in catalysis. NAD(+) is bound by residues lysine 250 and leucine 279–threonine 281.

Belongs to the TER reductase family. Monomer.

The catalysed reaction is a 2,3-saturated acyl-[ACP] + NAD(+) = a (2E)-enoyl-[ACP] + NADH + H(+). It participates in lipid metabolism; fatty acid biosynthesis. In terms of biological role, involved in the final reduction of the elongation cycle of fatty acid synthesis (FAS II). Catalyzes the reduction of a carbon-carbon double bond in an enoyl moiety that is covalently linked to an acyl carrier protein (ACP). In Vibrio cholerae serotype O1 (strain ATCC 39541 / Classical Ogawa 395 / O395), this protein is Enoyl-[acyl-carrier-protein] reductase [NADH].